The primary structure comprises 607 residues: Chaperone protein dnaK (607 aa).

Residues lysine 579–lysine 591 show a composition bias toward polar residues. The disordered stretch occupies residues lysine 579–glutamate 607. A compositionally biased stretch (basic and acidic residues) spans alanine 592 to glutamate 607.

The protein belongs to the heat shock protein 70 family.

The protein resides in the plastid. It is found in the chloroplast. Its function is as follows. Acts as a chaperone. This chain is Chaperone protein dnaK, found in Cyanidioschyzon merolae (strain NIES-3377 / 10D) (Unicellular red alga).